The following is a 136-amino-acid chain: Peptide methionine sulfoxide reductase MsrB (136 aa).

Residues 9–136 (DAEWKALLAE…NSASLDFKKK (128 aa)) enclose the MsrB domain. Zn(2+)-binding residues include Cys-53, Cys-56, Cys-102, and Cys-105. The active-site Nucleophile is Cys-125.

Belongs to the MsrB Met sulfoxide reductase family. Requires Zn(2+) as cofactor.

The enzyme catalyses L-methionyl-[protein] + [thioredoxin]-disulfide + H2O = L-methionyl-(R)-S-oxide-[protein] + [thioredoxin]-dithiol. The protein is Peptide methionine sulfoxide reductase MsrB of Variovorax paradoxus (strain S110).